The sequence spans 203 residues: Probable cytochrome c oxidase subunit 3 (203 aa).

5 helical membrane passes run 30–50 (IVWL…YFTA), 70–90 (AVPV…GVFA), 102–122 (WYVI…YEYY), 142–162 (LATG…IFLL), and 179–199 (IVVS…FTVI).

This sequence belongs to the cytochrome c oxidase subunit 3 family.

The protein localises to the cell membrane. The enzyme catalyses 4 Fe(II)-[cytochrome c] + O2 + 8 H(+)(in) = 4 Fe(III)-[cytochrome c] + 2 H2O + 4 H(+)(out). This is Probable cytochrome c oxidase subunit 3 (ctaE) from Mycolicibacterium paratuberculosis (strain ATCC BAA-968 / K-10) (Mycobacterium paratuberculosis).